The primary structure comprises 63 residues: Conotoxin TxMRCL-D012 (63 aa).

A signal peptide spans 1–19 (MRCLPVFVILLLLIASTPS). The propeptide occupies 20 to 47 (DTVPLKTKDDMPQASFHGNARRTLQMLS). Gln-50 carries the pyrrolidone carboxylic acid modification.

Belongs to the conotoxin T superfamily. Contains 2 disulfide bonds that can be either 'C1-C3, C2-C4' or 'C1-C4, C2-C3', since these disulfide connectivities have been observed for conotoxins with cysteine framework V (for examples, see AC P0DQQ7 and AC P81755). In terms of tissue distribution, expressed by the venom duct.

It is found in the secreted. The sequence is that of Conotoxin TxMRCL-D012 from Conus textile (Cloth-of-gold cone).